Here is a 472-residue protein sequence, read N- to C-terminus: MALNLTSSRRALGSLKPLTRAAFSGVRGYATAEPDLKATLREAIPAKRELLKKVKAHSNKVLGEVKVENTLGGMRGLKAMVWEGSVLDANEGIRFHGRTIKDCQKELPKGKTGTEMLPEAMFWLLLTGQVPSVNQVRTFSRELAEKAQIPEFISKMLDNFPKDLHPMTQFAMAVSALNYESKFAKAYEQGLNKADYWEPTFDDCISLLAKLPTIAAKIYQNAYRGGGALPAEVDLEQDWSYNFAAMLGKGGKENENFQDLLRLYLALHGDHEGGNVSAHATHLVGSALSDPFLSYSAGLQGLAGPLHGLAAQEVLRWIIQMKEAIPANYTEQDVNDYLWSTLNSGRVVPGYGHAVLRKPDPRFEALMDYAAARPEIANDPVFQLVEKNSRIAPEVLKKHGKTKNPYPNVDSSSGVLFHHYGFHETLYYTATFGVSRGLGPLAQLIWDRALGLPIERPKSINLEGILKQVEGQ.

The transit peptide at Met-1–Tyr-29 directs the protein to the mitochondrion. CoA is bound by residues Arg-75 and Lys-193. Position 271 (His-271) interacts with oxaloacetate. A CoA-binding site is contributed by Leu-306. The active site involves His-307. Positions 348, 350, and 351 each coordinate CoA. Residues His-353 and Arg-362 each coordinate oxaloacetate. His-353 is an active-site residue. Positions 402, 403, and 408 each coordinate CoA. Asp-410 is a catalytic residue. Oxaloacetate is bound by residues Arg-436 and Arg-456.

It belongs to the citrate synthase family. Homodimer.

The protein resides in the mitochondrion matrix. The catalysed reaction is propanoyl-CoA + oxaloacetate + H2O = (2S,3S)-2-methylcitrate + CoA + H(+). It carries out the reaction oxaloacetate + acetyl-CoA + H2O = citrate + CoA + H(+). The protein operates within organic acid metabolism; propanoate degradation. Component of the methylcitrate cycle that catalyzes the synthesis of (2S,3S)-2-methylcitrate from propionyl-CoA and oxaloacetate. Plays an important role in detoxification of propionyl-CoA, an inhibitor of both primary and secondary metabolism. Also has citrate synthase activity using as substrates acetyl-CoA and oxaloacetate. This Gibberella moniliformis (Maize ear and stalk rot fungus) protein is 2-methylcitrate synthase, mitochondrial.